The primary structure comprises 223 residues: Cytidine deaminase 3 (223 aa).

2 consecutive CMP/dCMP-type deaminase domains span residues 21 to 154 (TEPM…FSPD) and 184 to 223 (SDCS…WYRG). 62–64 (NVE) serves as a coordination point for substrate. Histidine 75 is a Zn(2+) binding site. The active-site Proton donor is the glutamate 77. Cysteine 110 and cysteine 113 together coordinate Zn(2+).

The protein belongs to the cytidine and deoxycytidylate deaminase family. Homodimer. Zn(2+) is required as a cofactor.

The catalysed reaction is cytidine + H2O + H(+) = uridine + NH4(+). It catalyses the reaction 2'-deoxycytidine + H2O + H(+) = 2'-deoxyuridine + NH4(+). In terms of biological role, this enzyme scavenges exogenous and endogenous cytidine and 2'-deoxycytidine for UMP synthesis. This Arabidopsis thaliana (Mouse-ear cress) protein is Cytidine deaminase 3 (CDA3).